The chain runs to 543 residues: Probable zinc transporter protein DDB_G0283629 (543 aa).

A disordered region spans residues 1–175 (MENFKNNELE…EESKPLNQLR (175 aa)). The Cytoplasmic portion of the chain corresponds to 1-186 (MENFKNNELE…LDSKKKARYS (186 aa)). 2 stretches are compositionally biased toward low complexity: residues 11 to 26 (SSPIINKNNSSHSINN) and 41 to 55 (NNNNDNNNTITNSHI). 2 stretches are compositionally biased toward basic and acidic residues: residues 56-66 (NNHDHKHNHEH) and 76-104 (HNHDHDHNHEEEYGHGNELEHNNDQEHNV). Residues 105–116 (GNKNLLTNNNNQ) are compositionally biased toward low complexity. Residues 130–140 (EDGSSSGGGGG) show a composition bias toward gly residues. Residues 187–207 (LILALTLTTIFMVGEIVGGYF) form a helical membrane-spanning segment. The Extracellular portion of the chain corresponds to 208 to 216 (ANSLAIMTD). A helical transmembrane segment spans residues 217 to 237 (AAHLLTDIGAMFLSLFAMWIS). Residues 238-251 (QHPPTSSMSFGFHR) lie on the Cytoplasmic side of the membrane. Residues 252–272 (AEILGALVSVLMIWALTGVLV) form a helical membrane-spanning segment. Topologically, residues 273 to 289 (YEAIQRILYPPDAVDGK) are extracellular. A helical transmembrane segment spans residues 290–310 (IMFIIASCGLFINIIDAIILH). The Cytoplasmic portion of the chain corresponds to 311 to 375 (WGSGGHGHSH…VRNINVHSAY (65 aa)). Residues 319–342 (SHGGGHGHSHGIGGGTQKKKSKKN) form a disordered region. A helical membrane pass occupies residues 376-396 (IHVLGDCFQSIGVMVASCIIW). Residues 397–402 (VHPHWK) are Extracellular-facing. A helical transmembrane segment spans residues 403–423 (IADPITTLIFSVIVLGTTIKL). At 424-543 (LRESLGVLME…NDNLSSPPNQ (120 aa)) the chain is on the cytoplasmic side. The segment at 516-543 (KCKDHSCPPPKPKKKKIKNDNLSSPPNQ) is disordered.

Belongs to the cation diffusion facilitator (CDF) transporter (TC 2.A.4) family. SLC30A subfamily.

It is found in the membrane. Its function is as follows. May be involved in zinc transport from the cytoplasm to either intracellular organelles or extracellular spaces. This is Probable zinc transporter protein DDB_G0283629 from Dictyostelium discoideum (Social amoeba).